A 61-amino-acid chain; its full sequence is ATP synthase subunit J, mitochondrial (61 aa).

Residues 13–32 (LVKYYWPFFVGFGLTFYGVA) traverse the membrane as a helical segment.

As to quaternary structure, F-type ATP synthases have 2 components, the catalytic core F(1) and the membrane-embedded component F(0), linked together by a central stalk and a peripheral stalk. The central stalk, also called rotor shaft, is often seen as part of F(1). The peripheral stalk is seen as part of F(0). F(0) contains the membrane channel next to the rotor. F-type ATP synthases form dimers but each monomer functions independently in ATP generation. The dimer consists of 18 different polypeptides: ATP1 (subunit alpha, part of F(1), 3 molecules per monomer), ATP2 (subunit beta, part of F(1), 3 molecules per monomer), ATP3 (subunit gamma, part of the central stalk), ATP4 (subunit b, part of the peripheral stalk), ATP5/OSCP (subunit 5/OSCP, part of the peripheral stalk), ATP6 (subunit a, part of the peripheral stalk), ATP7 (subunit d, part of the peripheral stalk), ATP8 (subunit 8, part of the peripheral stalk), OLI1 (subunit c, part of the rotor, 10 molecules per monomer), ATP14 (subunit h, part of the peripheral stalk), ATP15 (subunit epsilon, part of the central stalk), ATP16 (subunit delta, part of the central stalk), ATP17 (subunit f, part of the peripheral stalk), ATP18 (subunit i/j, part of the peripheral stalk). Dimer-specific subunits are ATP19 (subunit k, at interface between monomers), ATP20 (subunit g, at interface between monomers), TIM11 (subunit e, at interface between monomers). Also contains subunit L.

It is found in the mitochondrion inner membrane. Functionally, mitochondrial membrane ATP synthase (F(1)F(0) ATP synthase or Complex V) produces ATP from ADP in the presence of a proton gradient across the membrane which is generated by electron transport complexes of the respiratory chain. F-type ATP synthases consist of two structural domains, F(1) - containing the extramembraneous catalytic core, and F(0) - containing the membrane proton channel, linked together by a central stalk and a peripheral stalk. During catalysis, ATP synthesis in the catalytic domain of F(1) is coupled via a rotary mechanism of the central stalk subunits to proton translocation. Part of the complex F(0) domain. Minor subunit located with subunit a/ATP6 in the membrane. The protein is ATP synthase subunit J, mitochondrial of Pichia angusta (Yeast).